Here is an 83-residue protein sequence, read N- to C-terminus: RNA-binding protein Hfq (83 aa).

The Sm domain maps to 10-70; sequence DTFLNQVRKE…ISTVMPLRPI (61 aa).

Belongs to the Hfq family. Homohexamer.

Functionally, RNA chaperone that binds small regulatory RNA (sRNAs) and mRNAs to facilitate mRNA translational regulation in response to envelope stress, environmental stress and changes in metabolite concentrations. Also binds with high specificity to tRNAs. The chain is RNA-binding protein Hfq from Desulfitobacterium hafniense (strain Y51).